The primary structure comprises 97 residues: Co-chaperonin GroES (97 aa).

The protein belongs to the GroES chaperonin family. Heptamer of 7 subunits arranged in a ring. Interacts with the chaperonin GroEL.

It localises to the cytoplasm. Functionally, together with the chaperonin GroEL, plays an essential role in assisting protein folding. The GroEL-GroES system forms a nano-cage that allows encapsulation of the non-native substrate proteins and provides a physical environment optimized to promote and accelerate protein folding. GroES binds to the apical surface of the GroEL ring, thereby capping the opening of the GroEL channel. In Pectobacterium atrosepticum (strain SCRI 1043 / ATCC BAA-672) (Erwinia carotovora subsp. atroseptica), this protein is Co-chaperonin GroES.